We begin with the raw amino-acid sequence, 235 residues long: PRA1 family protein 1 (235 aa).

Residues 1–17 are compositionally biased toward polar residues; it reads MESNSNSNETMYGNPNI. The segment at 1–55 is disordered; sequence MESNSNSNETMYGNPNINMGFVDSGNSNIGNNTGSMSPPPQQQQQPQQASSTPAG. Residues 24-48 are compositionally biased toward low complexity; sequence SGNSNIGNNTGSMSPPPQQQQQPQQ. Transmembrane regions (helical) follow at residues 144–164 and 187–207; these read SVFF…LLFI and AFLS…LVGA.

The protein belongs to the PRA1 family.

The protein localises to the membrane. In terms of biological role, may act as a general Rab protein regulator. In Dictyostelium discoideum (Social amoeba), this protein is PRA1 family protein 1 (prafA).